Here is a 739-residue protein sequence, read N- to C-terminus: MEYHHRPHSPPPSDDDVVVIQMNAAAIAAVDEWSSTNEVDDAAAGKGGGLTRRTFSQAYKMKHRTPLEFTWRQVALLSFQSLGVVYGDLGTSPLYVFSSISLDDPGEADFVGILSIILWTFTMICLVKYVFIVLKADDHGEGGTFALYSLLRQHVNFKGNMPVPVTHLASDINLKFHSKKRILTSKLLKFLEQSTKWQAVITYIVLAGTCMVLGDGALTPAISVLSAVQGIQSRSSSITQAHVVLLSVIILFILFFFQKHGTSKVSFTFSPIMILWFTFVAFIGLYNIIKHYPPILKAVSPHYIIIYFIRNKRAAWETLGAIVLCITGAEAMFADLGHFNKSSIQMAFSVIVYPSMILAYAGQAAFLVKNPSKLSTTFYSSTPEPLFWPMFIIATLAAIVASQALISASFSIIRQSIALGCFPRVTMKHTSGKHEGQVYSPEINYFLMVACILITVGFKGGPEIGQAFGVAVIFVMLFTTNLMTVVMLIIWESNIALASLFFVFFFSIEGIYMTSLMNKILQGGWVPFAITAFFLIITLSWTYGRSKKGEYELANVMEREEFIKTVTTRSRVPGVCIFCTDMMNGIPPIVRHYVQHVASLRELMVFVTIRVLPVRTVLPEERFIIDKLEPVGVYRCIVQYGYMDNHNMEGDDYVASVIASLKEIAENDDEILVLDSALINGSTFVLGRTIIKMGTRHNCLKRFFINNLYRFLQKNFRSNMSSLKINPGKTLQVGMLYEI.

Over 1-81 (MEYHHRPHSP…RQVALLSFQS (81 aa)) the chain is Cytoplasmic. Residues 82–102 (LGVVYGDLGTSPLYVFSSISL) form a helical membrane-spanning segment. Over 103-112 (DDPGEADFVG) the chain is Extracellular. Residues 113-133 (ILSIILWTFTMICLVKYVFIV) traverse the membrane as a helical segment. Residues 134–198 (LKADDHGEGG…KFLEQSTKWQ (65 aa)) are Cytoplasmic-facing. Residues 199–219 (AVITYIVLAGTCMVLGDGALT) form a helical membrane-spanning segment. Topologically, residues 220–236 (PAISVLSAVQGIQSRSS) are extracellular. The chain crosses the membrane as a helical span at residues 237 to 257 (SITQAHVVLLSVIILFILFFF). Over 258–268 (QKHGTSKVSFT) the chain is Cytoplasmic. The helical transmembrane segment at 269–289 (FSPIMILWFTFVAFIGLYNII) threads the bilayer. The Extracellular segment spans residues 290–318 (KHYPPILKAVSPHYIIIYFIRNKRAAWET). The helical transmembrane segment at 319–339 (LGAIVLCITGAEAMFADLGHF) threads the bilayer. Residues 340–347 (NKSSIQMA) are Cytoplasmic-facing. Residues 348–368 (FSVIVYPSMILAYAGQAAFLV) traverse the membrane as a helical segment. Residues 369-385 (KNPSKLSTTFYSSTPEP) are Extracellular-facing. The chain crosses the membrane as a helical span at residues 386 to 406 (LFWPMFIIATLAAIVASQALI). The Cytoplasmic segment spans residues 407-437 (SASFSIIRQSIALGCFPRVTMKHTSGKHEGQ). The helical transmembrane segment at 438–458 (VYSPEINYFLMVACILITVGF) threads the bilayer. Topologically, residues 459–469 (KGGPEIGQAFG) are extracellular. A helical transmembrane segment spans residues 470–490 (VAVIFVMLFTTNLMTVVMLII). Topologically, residues 491–494 (WESN) are cytoplasmic. The chain crosses the membrane as a helical span at residues 495–515 (IALASLFFVFFFSIEGIYMTS). The Extracellular portion of the chain corresponds to 516 to 519 (LMNK). Residues 520–540 (ILQGGWVPFAITAFFLIITLS) traverse the membrane as a helical segment. Over 541-739 (WTYGRSKKGE…TLQVGMLYEI (199 aa)) the chain is Cytoplasmic.

Belongs to the HAK/KUP transporter (TC 2.A.72.3) family.

It localises to the membrane. Functionally, high-affinity potassium transporter. The polypeptide is Potassium transporter 26 (HAK26) (Oryza sativa subsp. japonica (Rice)).